We begin with the raw amino-acid sequence, 355 residues long: Methylthioribose-1-phosphate isomerase (355 aa).

Substrate-binding positions include 53-55, Arg-96, and Gln-205; that span reads RGA. Catalysis depends on Asp-246, which acts as the Proton donor. Substrate is bound at residue 256-257; the sequence is NK.

Belongs to the eIF-2B alpha/beta/delta subunits family. MtnA subfamily.

It catalyses the reaction 5-(methylsulfanyl)-alpha-D-ribose 1-phosphate = 5-(methylsulfanyl)-D-ribulose 1-phosphate. It participates in amino-acid biosynthesis; L-methionine biosynthesis via salvage pathway; L-methionine from S-methyl-5-thio-alpha-D-ribose 1-phosphate: step 1/6. Its function is as follows. Catalyzes the interconversion of methylthioribose-1-phosphate (MTR-1-P) into methylthioribulose-1-phosphate (MTRu-1-P). This Thermosynechococcus vestitus (strain NIES-2133 / IAM M-273 / BP-1) protein is Methylthioribose-1-phosphate isomerase.